The following is a 155-amino-acid chain: S-ribosylhomocysteine lyase (155 aa).

Fe cation is bound by residues His58, His62, and Cys125.

The protein belongs to the LuxS family. In terms of assembly, homodimer. The cofactor is Fe cation.

The catalysed reaction is S-(5-deoxy-D-ribos-5-yl)-L-homocysteine = (S)-4,5-dihydroxypentane-2,3-dione + L-homocysteine. Functionally, involved in the synthesis of autoinducer 2 (AI-2) which is secreted by bacteria and is used to communicate both the cell density and the metabolic potential of the environment. The regulation of gene expression in response to changes in cell density is called quorum sensing. Catalyzes the transformation of S-ribosylhomocysteine (RHC) to homocysteine (HC) and 4,5-dihydroxy-2,3-pentadione (DPD). In Chromohalobacter salexigens (strain ATCC BAA-138 / DSM 3043 / CIP 106854 / NCIMB 13768 / 1H11), this protein is S-ribosylhomocysteine lyase.